The following is a 283-amino-acid chain: Non-selective voltage-gated ion channel VDAC1 (283 aa).

Alanine 2 is modified (N-acetylalanine). Lysine 12 provides a ligand contact to ATP. Lysine 12 is covalently cross-linked (Glycyl lysine isopeptide (Lys-Gly) (interchain with G-Cter in ubiquitin)). At serine 13 the chain carries Phosphoserine. Position 19 is a phosphothreonine (threonine 19). Lysine 20 contacts ATP. Lysine 20 carries the post-translational modification N6-acetyllysine; alternate. N6-succinyllysine; alternate is present on lysine 20. Residue lysine 20 forms a Glycyl lysine isopeptide (Lys-Gly) (interchain with G-Cter in ubiquitin); alternate linkage. 2 consecutive transmembrane segments (beta stranded) span residues 26-35 and 39-47; these read LIKLDLKTKS and LEFTSSGSA. Glycyl lysine isopeptide (Lys-Gly) (interchain with G-Cter in ubiquitin) cross-links involve residues lysine 53 and lysine 61. Residues 54–64 form a beta stranded membrane-spanning segment; that stretch reads VNGSLETKYRW. The residue at position 67 (tyrosine 67) is a Phosphotyrosine. Transmembrane regions (beta stranded) follow at residues 69–76, 80–89, and 95–104; these read LTFTEKWN, TLGTEITVED, and LKLTFDSSFS. Threonine 107 carries the post-translational modification Phosphothreonine. Position 109 is an N6-acetyllysine; alternate (lysine 109). Lysine 109 participates in a covalent cross-link: Glycyl lysine isopeptide (Lys-Gly) (interchain with G-Cter in ubiquitin); alternate. Lysine 110 is covalently cross-linked (Glycyl lysine isopeptide (Lys-Gly) (interchain with G-Cter in ubiquitin)). Transmembrane regions (beta stranded) follow at residues 111–120, 123–130, 137–145, and 150–158; these read NAKIKTGYKR, INLGCDVD, SIRGALVLG, and LAGYQMNFE. Phosphoserine is present on serine 137. Residue lysine 161 forms a Glycyl lysine isopeptide (Lys-Gly) (interchain with G-Cter in ubiquitin) linkage. The next 6 membrane-spanning stretches (beta stranded) occupy residues 163–175, 178–185, 189–198, 202–211, 218–227, and 231–238; these read RVTQSNFAVGYKT, FQLHTNVN, EFGGSIYQKV, LETAVNLAWT, RFGIAAKYQV, and ACFSAKVN. Serine 193 bears the Phosphoserine; by NEK1 mark. Phosphoserine is present on serine 240. 242 to 244 serves as a coordination point for NAD(+); that stretch reads LIG. A beta stranded membrane pass occupies residues 242–251; that stretch reads LIGLGYTQTL. Lysine 252 carries the N6-acetyllysine modification. Residues 254–263 form a beta stranded membrane-spanning segment; it reads GIKLTLSALL. An NAD(+)-binding site is contributed by 260–264; that stretch reads SALLD. N6-acetyllysine; alternate is present on lysine 266. Lysine 266 participates in a covalent cross-link: Glycyl lysine isopeptide (Lys-Gly) (interchain with G-Cter in ubiquitin); alternate. Residues 273 to 282 traverse the membrane as a beta stranded segment; it reads HKLGLGLEFQ. Lysine 274 participates in a covalent cross-link: Glycyl lysine isopeptide (Lys-Gly) (interchain with G-Cter in ubiquitin).

This sequence belongs to the eukaryotic mitochondrial porin family. Homodimer and homotrimer; in response to cyclic AMP or calcium; oligomerization is required for scramblase activity. Component of the mitochondrial permeability transition pore complex (mPTPC), at least composed of SPG7, VDAC1 and PPIF. Interacts with SPG7, NIPSNAP2 and SLC25A30. Interacts with hexokinases including HK1. The HK1-VDAC1 complex interacts with ATF2. Interacts with BCL2L1. Interacts with BAK1. Interacts with RTL10/BOP (via BH3 domain). Interacts with amyloid-beta and APP; induces VDAC1 dephosphorylation. Interacts with TMEM41B. Interacts with BCAP31. Interacts with HSPA9; this interaction couples ITPR1 to VDAC1. In terms of processing, phosphorylation at Ser-193 by NEK1 promotes the closed conformational state preventing excessive mitochondrial membrane permeability and subsequent apoptotic cell death after injury. Phosphorylation by the AKT-GSK3B axis stabilizes the protein probably by preventing ubiquitin-mediated proteasomal degradation. Post-translationally, ubiquitinated. Undergoes monoubiquitination and polyubiquitination by PRKN; monoubiquitination at Lys-274 inhibits apoptosis, whereas polyubiquitination leads to its degradation and promotes mitophagy. Deubiquitinated by USP30. As to expression, widely expressed. High levels in heart and kidney with lower levels in brain and ascitic tumor. Very low levels in liver.

Its subcellular location is the mitochondrion outer membrane. It localises to the cell membrane. It is found in the membrane raft. It catalyses the reaction Ca(2+)(in) = Ca(2+)(out). The enzyme catalyses Na(+)(in) = Na(+)(out). The catalysed reaction is chloride(in) = chloride(out). It carries out the reaction Mg(2+)(in) = Mg(2+)(out). It catalyses the reaction K(+)(in) = K(+)(out). The enzyme catalyses ATP(in) = ATP(out). The catalysed reaction is L-glutamate(out) = L-glutamate(in). It carries out the reaction dopamine(out) = dopamine(in). It catalyses the reaction acetylcholine(in) = acetylcholine(out). The enzyme catalyses Fe(III)-[cytochrome c](out) = Fe(III)-[cytochrome c](in). The catalysed reaction is a 1,2-diacyl-sn-glycero-3-phosphocholine(in) = a 1,2-diacyl-sn-glycero-3-phosphocholine(out). It carries out the reaction a 1,2-diacyl-sn-glycero-3-phospho-L-serine(in) = a 1,2-diacyl-sn-glycero-3-phospho-L-serine(out). Inhibited by nitric oxide. Voltage-gated ion channel activity is inhibited by lanthanum(3+) and ruthenium red. Mitochondrial calcium transport is inhibited by lanthanum(3+), ruthenium red and Ru360. In terms of biological role, non-selective voltage-gated ion channel that mediates the transport of anions and cations through the mitochondrion outer membrane and plasma membrane. The channel at the outer mitochondrial membrane allows diffusion of small hydrophilic molecules; in the plasma membrane it is involved in cell volume regulation and apoptosis. It adopts an open conformation at low or zero membrane potential and a closed conformation at potentials above 30-40 mV. The open state has a weak anion selectivity whereas the closed state is cation-selective. Binds various signaling molecules, including the sphingolipid ceramide, the phospholipid phosphatidylcholine, and the sterols cholesterol and oxysterol. In depolarized mitochondria, acts downstream of PRKN and PINK1 to promote mitophagy or prevent apoptosis; polyubiquitination by PRKN promotes mitophagy, while monoubiquitination by PRKN decreases mitochondrial calcium influx which ultimately inhibits apoptosis. May participate in the formation of the permeability transition pore complex (PTPC) responsible for the release of mitochondrial products that triggers apoptosis. May mediate ATP export from cells. Part of a complex composed of HSPA9, ITPR1 and VDAC1 that regulates mitochondrial calcium-dependent apoptosis by facilitating calcium transport from the ER lumen to the mitochondria intermembrane space thus providing calcium for the downstream calcium channel MCU that directly releases it into mitochondria matrix. Functionally, catalyzes the scrambling of phospholipids across the outer mitochondrial membrane; the mechanism is unrelated to channel activity and is capable of translocating both anionic and zwitterionic phospholipids. This is Non-selective voltage-gated ion channel VDAC1 from Rattus norvegicus (Rat).